The primary structure comprises 162 residues: Ribosome maturation factor RimP (162 aa).

This sequence belongs to the RimP family.

It is found in the cytoplasm. Its function is as follows. Required for maturation of 30S ribosomal subunits. The protein is Ribosome maturation factor RimP of Ralstonia nicotianae (strain ATCC BAA-1114 / GMI1000) (Ralstonia solanacearum).